A 716-amino-acid polypeptide reads, in one-letter code: Ubiquitin thioesterase zranb1-B (716 aa).

2 RanBP2-type zinc fingers span residues 3-33 and 82-111; these read DLGL…QRHN and TSSK…QRQQ. Zn(2+) is bound by residues Cys-10, Cys-13, Cys-24, Cys-27, Cys-88, Cys-91, Cys-102, and Cys-105. The disordered stretch occupies residues 113 to 143; that stretch reads SQQHSPLSPSETPQTSGSRPSPVTSDPCEEY. The span at 118 to 136 shows a compositional bias: polar residues; sequence PLSPSETPQTSGSRPSPVT. The RanBP2-type 3 zinc finger occupies 152–181; sequence HAQRWPCSACTYENWPKSLRCVVCDHPKPS. Residues Cys-158, Cys-161, Cys-172, and Cys-175 each coordinate Zn(2+). The interval 178 to 228 is disordered; sequence PKPSGSPETPQQDSEAESATSPSIVNEQERENVRTAGGGGGGSRGRLRKLS. Residues 183–203 show a composition bias toward polar residues; that stretch reads SPETPQQDSEAESATSPSIVN. 2 ANK repeats span residues 268–298 and 321–348; these read RRSD…SGGD and FTLV…QQTA. The 161-residue stretch at 440–600 folds into the OTU domain; that stretch reads LYALWNRTAG…RGHFSALVAM (161 aa). Cys-451 acts as the Nucleophile in catalysis. The active-site Proton acceptor is the His-593.

The protein belongs to the peptidase C64 family.

It localises to the cytoplasm. It is found in the nucleus. The catalysed reaction is Thiol-dependent hydrolysis of ester, thioester, amide, peptide and isopeptide bonds formed by the C-terminal Gly of ubiquitin (a 76-residue protein attached to proteins as an intracellular targeting signal).. Its function is as follows. Ubiquitin thioesterase, which specifically hydrolyzes 'Lys-29'-linked and 'Lys-33'-linked diubiquitin. Also cleaves 'Lys-63'-linked chains, but with 40-fold less efficiency compared to 'Lys-29'-linked ones. Positive regulator of the Wnt signaling pathway that deubiquitinates apc protein, a negative regulator of Wnt-mediated transcription. Acts as a regulator of autophagy by mediating deubiquitination of pik3c3/vps34, thereby promoting autophagosome maturation. Plays a role in the regulation of cell morphology and cytoskeletal organization. Required in the stress fiber dynamics and cell migration. The protein is Ubiquitin thioesterase zranb1-B (zranb1b) of Danio rerio (Zebrafish).